The primary structure comprises 1202 residues: Nitric oxide synthase 3 (1202 aa).

The tract at residues 1–70 (MGNLKSVGQE…PPDGPKFPRV (70 aa)) is disordered. Gly-2 carries the N-myristoyl glycine lipid modification. 2 S-palmitoyl cysteine lipidation sites follow: Cys-15 and Cys-26. Positions 15-27 (CGLGLGLGLGLCG) are enriched in gly residues. Over residues 33–65 (SPAPEPSQAPVPPSPTRPAPDHSPPLTRPPDGP) the composition is skewed to pro residues. The Zn(2+) site is built by Cys-93 and Cys-98. Residues 97–485 (RCLGSLVFPR…PDPWKGSAAK (389 aa)) form an interaction with NOSIP region. Ser-101 is a binding site for (6R)-L-erythro-5,6,7,8-tetrahydrobiopterin. Cys-183 contributes to the heme b binding site. Positions 246, 355, 356, and 360 each coordinate L-arginine. The (6R)-L-erythro-5,6,7,8-tetrahydrobiopterin site is built by Ala-445, Trp-446, and Phe-459. Position 474 (Tyr-474) interacts with heme b. The segment at 489–509 (ITRKKTFKEVANAVKISASLM) is calmodulin-binding. Position 494 is a phosphothreonine; by AMPK (Thr-494). The Flavodoxin-like domain occupies 519–702 (ATILYGSETG…AFRGWAQAAF (184 aa)). FMN is bound by residues Ser-525, Glu-526, Thr-527, Arg-529, Ser-571, and Thr-572. Residues Ser-614, Ser-632, and Ser-637 each carry the phosphoserine modification. 4 residues coordinate FMN: Ser-653, Cys-660, Glu-686, and Gln-690. Residues 755–1001 (RKMFQATILS…IRGAPSFRLP (247 aa)) enclose the FAD-binding FR-type domain. NADP(+) is bound at residue Arg-775. His-797 is a binding site for FAD. The segment at 817-843 (EDPPPSTEPVAVEQLEKGSPGGPPPGW) is disordered. At Ser-835 the chain carries Phosphoserine. FAD-binding residues include Arg-937, Tyr-939, Ser-940, Thr-955, Ala-957, Tyr-961, Val-974, Cys-975, and Ser-976. Residues Thr-1015, Arg-1048, Ser-1077, Arg-1078, Lys-1084, Tyr-1086, and Gln-1088 each coordinate NADP(+). A Phosphothreonine modification is found at Thr-1174. Ser-1176 is subject to Phosphoserine; by AMPK. Ser-1178 carries the phosphoserine modification.

This sequence belongs to the NOS family. Homodimer. Interacts with NOSIP and NOSTRIN. Interacts with HSP90AB1. Forms a complex with ASL, ASS1 and SLC7A1; the complex regulates cell-autonomous L-arginine synthesis and citrulline recycling while channeling extracellular L-arginine to nitric oxide synthesis pathway. Requires heme b as cofactor. It depends on FAD as a cofactor. The cofactor is FMN. (6R)-L-erythro-5,6,7,8-tetrahydrobiopterin is required as a cofactor. Post-translationally, phosphorylation by AMPK at Ser-1176 in the presence of Ca(2+)-calmodulin (CaM) activates activity. In absence of Ca(2+)-calmodulin, AMPK also phosphorylates Thr-494, resulting in inhibition of activity. Expressed constitutively by vascular endothelium. Detected in alveolar and serosal epithelial cells as well as in endothelial cells in one day old rat. In adult lung, detected in rare endothelial cells.

The protein resides in the membrane. It is found in the caveola. The protein localises to the cytoplasm. It localises to the cytoskeleton. Its subcellular location is the golgi apparatus. The protein resides in the cell membrane. The catalysed reaction is 2 L-arginine + 3 NADPH + 4 O2 + H(+) = 2 L-citrulline + 2 nitric oxide + 3 NADP(+) + 4 H2O. Stimulated by calcium/calmodulin. Inhibited by NOSIP and NOSTRIN. Produces nitric oxide (NO) which is implicated in vascular smooth muscle relaxation through a cGMP-mediated signal transduction pathway. NO mediates vascular endothelial growth factor (VEGF)-induced angiogenesis in coronary vessels and promotes blood clotting through the activation of platelets. This chain is Nitric oxide synthase 3, found in Rattus norvegicus (Rat).